The sequence spans 270 residues: Protein-ADP-ribose hydrolase (270 aa).

The Macro domain occupies 73 to 267 (VSVKDCQKTN…LYDTYLQKEN (195 aa)). ADP-D-ribose contacts are provided by aspartate 92, isoleucine 93, and asparagine 106. Zn(2+) is bound by residues cysteine 112, histidine 117, and cysteine 119. 8 residues coordinate ADP-D-ribose: cysteine 119, isoleucine 120, aspartate 121, serine 212, threonine 213, glycine 214, glutamate 215, and phenylalanine 216.

This sequence belongs to the MacroD-type family. Zn-Macro subfamily. The cofactor is Zn(2+).

The catalysed reaction is 4-O-(ADP-D-ribosyl)-L-aspartyl-[protein] + H2O = L-aspartyl-[protein] + ADP-D-ribose + H(+). Its function is as follows. ADP-ribosylhydrolase that specifically reverses the SirTM-mediated mono-ADP-ribosylation at an asparatate residue of GcvH-L, by releasing ADP-ribose from the target protein. May play a role in the regulation of the response to host-induced oxidative stress. This Streptococcus pyogenes serotype M18 (strain MGAS8232) protein is Protein-ADP-ribose hydrolase.